Here is a 438-residue protein sequence, read N- to C-terminus: Aspartate--tRNA(Asp/Asn) ligase (438 aa).

Position 176 (Glu-176) interacts with L-aspartate. The interval 198-201 is aspartate; that stretch reads QLYK. Arg-220 contacts L-aspartate. ATP contacts are provided by residues 220–222, 228–230, and Glu-361; these read RAE and RHL. Glu-361 and Ser-364 together coordinate Mg(2+). L-aspartate is bound by residues Ser-364 and Arg-368. 409 to 412 is an ATP binding site; it reads GADR.

It belongs to the class-II aminoacyl-tRNA synthetase family. Type 2 subfamily. Homodimer. Mg(2+) is required as a cofactor.

The protein resides in the cytoplasm. The catalysed reaction is tRNA(Asx) + L-aspartate + ATP = L-aspartyl-tRNA(Asx) + AMP + diphosphate. Functionally, aspartyl-tRNA synthetase with relaxed tRNA specificity since it is able to aspartylate not only its cognate tRNA(Asp) but also tRNA(Asn). Reaction proceeds in two steps: L-aspartate is first activated by ATP to form Asp-AMP and then transferred to the acceptor end of tRNA(Asp/Asn). In Methanococcus maripaludis (strain C7 / ATCC BAA-1331), this protein is Aspartate--tRNA(Asp/Asn) ligase.